The following is a 762-amino-acid chain: Probable disease resistance protein At1g61300 (762 aa).

Gly2 carries the N-myristoyl glycine lipid modification. Residues Cys3 and Cys4 are each lipidated (S-palmitoyl cysteine). Residues 26 to 329 (NINRNSFGVE…CEGFIGEDQV (304 aa)) form the NB-ARC domain. 68 to 75 (GMGGVGKT) provides a ligand contact to ATP. LRR repeat units lie at residues 401-422 (AVRR…SKCS), 423-444 (ELTT…FIRY), 447-470 (KLVV…SGLV), 471-493 (SLQF…KKLK), and 494-516 (KLTF…SRLL).

This sequence belongs to the disease resistance NB-LRR family.

It localises to the cell membrane. Functionally, probable disease resistance protein. The protein is Probable disease resistance protein At1g61300 of Arabidopsis thaliana (Mouse-ear cress).